A 676-amino-acid polypeptide reads, in one-letter code: Vitamin K-dependent protein S (676 aa).

Residues 1–24 form the signal peptide; that stretch reads MRVLGGRCGALLACLLLVLPVSEA. The propeptide occupies 25 to 41; it reads NFLSKQQASQVLVRKRR. Positions 42–87 constitute a Gla domain; that stretch reads ANSLLEETKQGNLERECIEELCNKEEAREVFENDPETDYFYPKYLV. 4-carboxyglutamate is present on residues E47, E48, E55, E57, E60, E61, E66, E67, E70, E73, and E77. C58 and C63 are joined by a disulfide. The segment at 88–116 is thrombin-sensitive; it reads CLRSFQTGLFTAARQSTNAYPDLRSCVNA. Positions 117-155 constitute an EGF-like 1 domain; it reads IPDQCSPLPCNEDGYMSCKDGKASFTCTCKPGWQGEKCE. 13 disulfide bridges follow: C121–C134, C126–C143, C145–C154, C161–C175, C171–C184, C186–C199, C205–C217, C212–C226, C228–C241, C247–C256, C252–C265, C267–C282, and C449–C475. D136 is modified ((3R)-3-hydroxyaspartate). The EGF-like 2; calcium-binding domain maps to 157 to 200; that stretch reads DINECKDPSNINGGCSQICDNTPGSYHCSCKNGFVMLSNKKDCK. The region spanning 201 to 242 is the EGF-like 3; calcium-binding domain; sequence DVDECSLKPSICGTAVCKNIPGDFECECPEGYRYNLKSKSCE. The EGF-like 4; calcium-binding domain maps to 243 to 283; sequence DIDECSENMCAQLCVNYPGGYTCYCDGKKGFKLAQDQKSCE. 2 Laminin G-like domains span residues 299–475 and 484–666; these read LLYL…NKHC and YYPG…AHSC. N-linked (GlcNAc...) asparagine glycosylation is found at N499, N509, and N530. Residues C639 and C666 are joined by a disulfide bond.

The iron and 2-oxoglutarate dependent 3-hydroxylation of aspartate and asparagine is (R) stereospecific within EGF domains. Plasma.

It localises to the secreted. Its function is as follows. Anticoagulant plasma protein; it is a cofactor to activated protein C in the degradation of coagulation factors Va and VIIIa. It helps to prevent coagulation and stimulating fibrinolysis. This is Vitamin K-dependent protein S (PROS1) from Homo sapiens (Human).